Reading from the N-terminus, the 369-residue chain is Anhydro-N-acetylmuramic acid kinase (369 aa).

12-19 is a binding site for ATP; the sequence is GTSLDGVD.

The protein belongs to the anhydro-N-acetylmuramic acid kinase family.

It catalyses the reaction 1,6-anhydro-N-acetyl-beta-muramate + ATP + H2O = N-acetyl-D-muramate 6-phosphate + ADP + H(+). The protein operates within amino-sugar metabolism; 1,6-anhydro-N-acetylmuramate degradation. It participates in cell wall biogenesis; peptidoglycan recycling. Functionally, catalyzes the specific phosphorylation of 1,6-anhydro-N-acetylmuramic acid (anhMurNAc) with the simultaneous cleavage of the 1,6-anhydro ring, generating MurNAc-6-P. Is required for the utilization of anhMurNAc either imported from the medium or derived from its own cell wall murein, and thus plays a role in cell wall recycling. This Actinobacillus pleuropneumoniae serotype 5b (strain L20) protein is Anhydro-N-acetylmuramic acid kinase.